Consider the following 397-residue polypeptide: Tryptophan synthase beta chain (397 aa).

Position 91 is an N6-(pyridoxal phosphate)lysine (Lys91).

This sequence belongs to the TrpB family. Tetramer of two alpha and two beta chains. It depends on pyridoxal 5'-phosphate as a cofactor.

It carries out the reaction (1S,2R)-1-C-(indol-3-yl)glycerol 3-phosphate + L-serine = D-glyceraldehyde 3-phosphate + L-tryptophan + H2O. It functions in the pathway amino-acid biosynthesis; L-tryptophan biosynthesis; L-tryptophan from chorismate: step 5/5. The beta subunit is responsible for the synthesis of L-tryptophan from indole and L-serine. This is Tryptophan synthase beta chain from Bacillus cereus (strain Q1).